The sequence spans 129 residues: Acetophenone carboxylase beta subunit (129 aa).

As to quaternary structure, acetophenone carboxylase consists of five subunits; a heterooctameric subcomplex of two alpha (Apc1), two beta (Apc2), two gamma (Apc3) and two delta (Apc4) subunits assembles with the epsilon (Apc5) subunit in an unknown stoichiometry. The cofactor is Mg(2+). Requires Mn(2+) as cofactor.

The protein localises to the cytoplasm. The enzyme catalyses acetophenone + hydrogencarbonate + 2 ATP + H2O = 3-oxo-3-phenylpropanoate + 2 ADP + 2 phosphate + 2 H(+). With respect to regulation, inhibited by zinc ions, carbamoylphosphate and beta,gamma-imido-ATP. Catalyzes the carboxylation of acetophenone to form 3-oxo-3-phenylpropanoate (benzoylacetate) in the anaerobic catabolism of ethylbenzene. Also carboxylates propiophenone at the same rate and 4-acetyl-pyridine at lower rates. The protein is Acetophenone carboxylase beta subunit (apc2) of Aromatoleum aromaticum (strain DSM 19018 / LMG 30748 / EbN1) (Azoarcus sp. (strain EbN1)).